Consider the following 293-residue polypeptide: ATP phosphoribosyltransferase (293 aa).

It belongs to the ATP phosphoribosyltransferase family. Long subfamily. The cofactor is Mg(2+).

Its subcellular location is the cytoplasm. The enzyme catalyses 1-(5-phospho-beta-D-ribosyl)-ATP + diphosphate = 5-phospho-alpha-D-ribose 1-diphosphate + ATP. The protein operates within amino-acid biosynthesis; L-histidine biosynthesis; L-histidine from 5-phospho-alpha-D-ribose 1-diphosphate: step 1/9. Its activity is regulated as follows. Feedback inhibited by histidine. Its function is as follows. Catalyzes the condensation of ATP and 5-phosphoribose 1-diphosphate to form N'-(5'-phosphoribosyl)-ATP (PR-ATP). Has a crucial role in the pathway because the rate of histidine biosynthesis seems to be controlled primarily by regulation of HisG enzymatic activity. In Solidesulfovibrio magneticus (strain ATCC 700980 / DSM 13731 / RS-1) (Desulfovibrio magneticus), this protein is ATP phosphoribosyltransferase.